The primary structure comprises 506 residues: Glutamate--tRNA ligase (506 aa).

The short motif at 24–34 (PSPTGLQHIGG) is the 'HIGH' region element. 4 residues coordinate Zn(2+): Cys121, Cys123, Cys148, and His150. Residues 266–270 (KLSKR) carry the 'KMSKS' region motif. Position 269 (Lys269) interacts with ATP.

The protein belongs to the class-I aminoacyl-tRNA synthetase family. Glutamate--tRNA ligase type 1 subfamily. Monomer. Requires Zn(2+) as cofactor.

The protein resides in the cytoplasm. It catalyses the reaction tRNA(Glu) + L-glutamate + ATP = L-glutamyl-tRNA(Glu) + AMP + diphosphate. Its function is as follows. Catalyzes the attachment of glutamate to tRNA(Glu) in a two-step reaction: glutamate is first activated by ATP to form Glu-AMP and then transferred to the acceptor end of tRNA(Glu). The chain is Glutamate--tRNA ligase from Borrelia duttonii (strain Ly).